A 177-amino-acid chain; its full sequence is Nucleoside triphosphate/diphosphate phosphatase (177 aa).

Catalysis depends on Arg-23, which acts as the Proton donor. Asn-87, Asp-103, Asp-105, Asp-107, Asp-120, and Glu-123 together coordinate Mg(2+).

It belongs to the Ntdp family. Mg(2+) serves as cofactor.

The catalysed reaction is a ribonucleoside 5'-triphosphate + H2O = a ribonucleoside 5'-diphosphate + phosphate + H(+). The enzyme catalyses a ribonucleoside 5'-diphosphate + H2O = a ribonucleoside 5'-phosphate + phosphate + H(+). Functionally, has nucleoside phosphatase activity towards nucleoside triphosphates and nucleoside diphosphates. In Enterococcus faecalis (strain ATCC 700802 / V583), this protein is Nucleoside triphosphate/diphosphate phosphatase.